Consider the following 311-residue polypeptide: Iron-binding protein YfeA (311 aa).

A signal peptide spans 1–31 (MIERLNSPFLRAAALFTIVAFSSLISTAALA). His-76, His-141, Glu-207, and Asp-282 together coordinate Fe(2+).

Belongs to the bacterial solute-binding protein 9 family. In terms of assembly, monomer.

It is found in the periplasm. In terms of biological role, part of the ATP-binding cassette (ABC) transport system YfeABC involved in iron import. Binds iron with high affinity and specificity and delivers it to the membrane permease for translocation into the cytoplasm. Also binds Mn(2+) and Zn(2+). The protein is Iron-binding protein YfeA (yfeA) of Yersinia pestis.